Here is a 37-residue protein sequence, read N- to C-terminus: Potassium channel toxin alpha-KTx 3.13 (37 aa).

3 disulfide bridges follow: C7–C27, C13–C32, and C17–C34. K37 carries the lysine amide modification.

This sequence belongs to the short scorpion toxin superfamily. Potassium channel inhibitor family. Alpha-KTx 03 subfamily. As to expression, expressed by the venom gland.

It is found in the secreted. Functionally, blocks voltage-gated potassium channels Kv1.1/KCNA1 (IC(50)=203.15 pM), Kv1.2/KCNA2 (IC(50)=8.92 nM) from rat and human Kv1.3 KCNA3/KCNA3 (IC(50)=171 pM) potently. At 2 uM, also blocks Shaker IR and has a moderate effect on rat Kv1.6/KCNA6. The protein is Potassium channel toxin alpha-KTx 3.13 of Mesobuthus eupeus (Lesser Asian scorpion).